A 292-amino-acid polypeptide reads, in one-letter code: Elongation factor Ts (292 aa).

The interval 82-85 (TDFV) is involved in Mg(2+) ion dislocation from EF-Tu.

It belongs to the EF-Ts family.

It is found in the cytoplasm. Functionally, associates with the EF-Tu.GDP complex and induces the exchange of GDP to GTP. It remains bound to the aminoacyl-tRNA.EF-Tu.GTP complex up to the GTP hydrolysis stage on the ribosome. The sequence is that of Elongation factor Ts from Bordetella parapertussis (strain 12822 / ATCC BAA-587 / NCTC 13253).